The primary structure comprises 899 residues: CNK3/IPCEF1 fusion protein (899 aa).

Residues 7 to 72 (WSPKQVVDWT…LEAVDLLCAL (66 aa)) enclose the SAM domain. The 95-residue stretch at 80–174 (NMKNLVLKLR…TTVQKDCFVA (95 aa)) folds into the CRIC domain. Positions 211-293 (EVHLPNIKPG…GVVLLLKKRP (83 aa)) constitute a PDZ domain. 2 disordered regions span residues 309 to 334 (WKPP…DTSL) and 347 to 390 (PPPP…FLDQ). The DUF1170 domain maps to 332-457 (TSLKKEKSAI…ARPRGHGRKA (126 aa)). At S383 the chain carries Phosphoserine. Positions 503–602 (HADCQGWLYK…WLNKLGSAVI (100 aa)) constitute a PH domain. Disordered regions lie at residues 605–687 (ESTT…PDTV), 735–770 (LSSD…TKVS), and 868–899 (QQQR…ENSI). Over residues 613–624 (CYSESEQEDPEI) the composition is skewed to acidic residues. The segment covering 634–662 (ASQTQSLTAQQASSSSPSLSGTSYSFSSL) has biased composition (low complexity). A compositionally biased stretch (polar residues) spans 663–676 (ENTVKTPSSFPSSL). Residues 735 to 745 (LSSDDTSSLSS) show a composition bias toward low complexity. A compositionally biased stretch (basic and acidic residues) spans 761–770 (IMDKEETKVS). Residues 851–899 (KYREWKVMNTLLIQDIYQQQRASPAPDDTDDTPQELKKSPSSPSVENSI) are required for interaction with CYTH2. At S873 the chain carries Phosphoserine. Residues 889 to 899 (SPSSPSVENSI) are compositionally biased toward polar residues.

It belongs to the CNKSR family.

Its function is as follows. Required for hepatocyte growth factor (HGF)-dependent activation of Arf6 and HGF-stimulated cell migration. The protein is CNK3/IPCEF1 fusion protein (CNK3/IPCEF1) of Homo sapiens (Human).